The chain runs to 211 residues: Cytochrome c biogenesis ATP-binding export protein CcmA (211 aa).

The ABC transporter domain occupies Leu-17 to Trp-209. Gly-49–Ser-56 serves as a coordination point for ATP.

This sequence belongs to the ABC transporter superfamily. CcmA exporter (TC 3.A.1.107) family. As to quaternary structure, the complex is composed of two ATP-binding proteins (CcmA) and two transmembrane proteins (CcmB).

It localises to the cell inner membrane. It catalyses the reaction heme b(in) + ATP + H2O = heme b(out) + ADP + phosphate + H(+). In terms of biological role, part of the ABC transporter complex CcmAB involved in the biogenesis of c-type cytochromes; once thought to export heme, this seems not to be the case, but its exact role is uncertain. Responsible for energy coupling to the transport system. The sequence is that of Cytochrome c biogenesis ATP-binding export protein CcmA from Gluconobacter oxydans (strain 621H) (Gluconobacter suboxydans).